The primary structure comprises 1045 residues: MDIS1-interacting receptor like kinase 2 (1045 aa).

Positions 1 to 43 are cleaved as a signal peptide; it reads MNKTNPERKISLTSFKERMACKEKPRDLQVLLIISIVLSCSFA. The Extracellular segment spans residues 44 to 709; the sequence is VSATVEEANA…SKKSHKDRNL (666 aa). N-linked (GlcNAc...) asparagine glycans are attached at residues Asn-63, Asn-77, Asn-99, and Asn-119. LRR repeat units lie at residues 92–116, 117–140, 141–165, 166–189, 191–212, 213–237, 238–260, 262–285, 286–309, 311–333, 334–356, 357–381, 383–405, 406–429, 431–452, 453–476, 477–501, 502–525, 527–549, 550–573, 575–597, 598–620, 621–644, and 646–670; these read LGSIIRLNLTNTGIEGTFEDFPFSS, LPNLTFVDLSMNRFSGTISPLWGR, FSKLEYFDLSINQLVGEIPPELGDL, SNLDTLHLVENKLNGSIPSEIGRL, KVTEIAIYDNLLTGPIPSSFGN, LTKLVNLYLFINSLSGSIPSEIGNL, PNLRELCLDRNNLTGKIPSSFGN, KNVTLLNMFENQLSGEIPPEIGNM, TALDTLSLHTNKLTGPIPSTLGNI, TLAVLHLYLNQLNGSIPPELGEM, ESMIDLEISENKLTGPVPDSFGK, LTALEWLFLRDNQLSGPIPPGIANS, ELTVLQLDTNNFTGFLPDTICRG, GKLENLTLDDNHFEGPVPKSLRDC, SLIRVRFKGNSFSGDISEAFGV, YPTLNFIDLSNNNFHGQLSANWEQ, SQKLVAFILSNNSITGAIPPEIWNM, TQLSQLDLSSNRITGELPESISNI, RISKLQLNGNRLSGKIPSGIRLL, TNLEYLDLSSNRFSSEIPPTLNNL, RLYYMNLSRNDLDQTIPEGLTKL, SQLQMLDLSYNQLDGEISSQFRS, LQNLERLDLSHNNLSGQIPPSFKD, and LALTHVDVSHNNLQGPIPDNAAFRN. 2 N-linked (GlcNAc...) asparagine glycosylation sites follow: Asn-179 and Asn-212. Residues Asn-249, Asn-263, and Asn-284 are each glycosylated (N-linked (GlcNAc...) asparagine). An N-linked (GlcNAc...) asparagine glycan is attached at Asn-323. Residues Asn-380, Asn-393, and Asn-410 are each glycosylated (N-linked (GlcNAc...) asparagine). Asn-487 and Asn-500 each carry an N-linked (GlcNAc...) asparagine glycan. An N-linked (GlcNAc...) asparagine glycan is attached at Asn-580. The N-linked (GlcNAc...) asparagine glycan is linked to Asn-633. An N-linked (GlcNAc...) asparagine glycan is attached at Asn-687. A helical transmembrane segment spans residues 710–730; that stretch reads IIYILVPIIGAIIILSVCAGI. The Cytoplasmic segment spans residues 731–1045; that stretch reads FICFRKRTKQ…TMLSISTAFS (315 aa). Thr-772 is subject to Phosphothreonine. The Protein kinase domain occupies 775 to 1045; that stretch reads FDPKYLIGTG…TMLSISTAFS (271 aa). ATP contacts are provided by residues 781–789 and Lys-802; that span reads IGTGGHGKV. A phosphotyrosine mark is found at Tyr-853 and Tyr-892. Catalysis depends on Asp-905, which acts as the Proton acceptor. Phosphoserine is present on Ser-938. Residues Tyr-946 and Tyr-953 each carry the phosphotyrosine modification.

It belongs to the protein kinase superfamily. Ser/Thr protein kinase family. Interacts with MDIS1 and LURE1.2. Binds to SCOOP12; this interaction triggers the formation of complex between MIK2 and the BAK1/SERK3 and SERK4 coreceptors. As to expression, expressed in pollen tubes. Highly expressed in shoots, roots and leaves.

It is found in the cell membrane. It carries out the reaction L-seryl-[protein] + ATP = O-phospho-L-seryl-[protein] + ADP + H(+). The enzyme catalyses L-threonyl-[protein] + ATP = O-phospho-L-threonyl-[protein] + ADP + H(+). Functionally, acts as a receptor of SCOOP peptides from Brassicaceae plants regulating multiple processing including plant growth, development and stress responses. Perception of SCOOP peptides induces the association of MIK2 with the coreceptors BAK1/SERK3 and SERK4 and relays the signaling through the activation of receptor-like cytosolic kinases (RLCKs) BIK1 and PBL1. Also able to detect SCOOP-like proteins (SCOOPL) present in fungal Fusarium spp. and bacterial Comamonadaceae to elicit various immune responses, including growth inhibition, ROS production, calcium Ca(2+) influx, MAPK activation and MYB51 promoter activation in roots, thus being required for resistance to several root pathogens. Involved in the pollen tube perception of the female signal. Required to trigger defense responses toward generalist herbivores such as Spodoptera littoralis, probably via the activation of jasmonate and indole glucosinolate biosynthesis. The sequence is that of MDIS1-interacting receptor like kinase 2 from Arabidopsis thaliana (Mouse-ear cress).